The following is a 219-amino-acid chain: Orotidine 5'-phosphate decarboxylase (219 aa).

Substrate contacts are provided by residues Asp10, Lys32, 58–67, Ser113, 163–173, Gly186, and Arg187; these read DFKVADIPYT and PGIGAQGGDPY. Lys60 serves as the catalytic Proton donor.

Belongs to the OMP decarboxylase family. Type 1 subfamily. In terms of assembly, homodimer.

The catalysed reaction is orotidine 5'-phosphate + H(+) = UMP + CO2. It participates in pyrimidine metabolism; UMP biosynthesis via de novo pathway; UMP from orotate: step 2/2. In terms of biological role, catalyzes the decarboxylation of orotidine 5'-monophosphate (OMP) to uridine 5'-monophosphate (UMP). This Thermoplasma volcanium (strain ATCC 51530 / DSM 4299 / JCM 9571 / NBRC 15438 / GSS1) protein is Orotidine 5'-phosphate decarboxylase.